Consider the following 186-residue polypeptide: Putative manganese efflux pump MntP (186 aa).

6 consecutive transmembrane segments (helical) span residues 5–25 (VLIGEILTLSMMAFALGMDAF), 41–61 (VFQIGVIIGLFHVIMPLGGMI), 72–92 (ALAGYIGGALLLVLGIQMIVA), 107–127 (FGLFVFAVGVSLDSFSVGLSL), 135–155 (ILTIFLFGLFSMVLTWAGLLL), and 166–186 (YSEALGGAILLSFGLKLLLPI).

It belongs to the MntP (TC 9.B.29) family.

The protein localises to the cell membrane. Its function is as follows. Probably functions as a manganese efflux pump. The polypeptide is Putative manganese efflux pump MntP (Bacillus licheniformis (strain ATCC 14580 / DSM 13 / JCM 2505 / CCUG 7422 / NBRC 12200 / NCIMB 9375 / NCTC 10341 / NRRL NRS-1264 / Gibson 46)).